An 88-amino-acid chain; its full sequence is Three-finger toxin 3FTx-2 (88 aa).

The signal sequence occupies residues 1–21; that stretch reads MKTLLLTLVVVTIVCLDLGNT. 4 disulfides stabilise this stretch: Cys-27/Cys-48, Cys-41/Cys-66, Cys-70/Cys-81, and Cys-82/Cys-87.

The protein belongs to the three-finger toxin family. Ancestral subfamily. Orphan group II sub-subfamily. Expressed by the venom gland.

Its subcellular location is the secreted. In terms of biological role, binds with low affinity to muscular (alpha-1-beta-1-delta-epsilon/CHRNA1-CHRNB1-CHRND-CHRNE) and very low affinity to neuronal (alpha-7/CHRNA7) nicotinic acetylcholine receptor (nAChR). This chain is Three-finger toxin 3FTx-2, found in Micrurus corallinus (Brazilian coral snake).